A 56-amino-acid polypeptide reads, in one-letter code: uncharacterized protein (56 aa).

It belongs to the archaeal ATPase family.

This is an uncharacterized protein from Methanocaldococcus jannaschii (strain ATCC 43067 / DSM 2661 / JAL-1 / JCM 10045 / NBRC 100440) (Methanococcus jannaschii).